The chain runs to 131 residues: Metalloproteinase inhibitor (131 aa).

Residues methionine 1 to alanine 29 form the signal peptide. 2 disulfides stabilise this stretch: cysteine 33-cysteine 39 and cysteine 93-cysteine 98.

Inhibits microbial metallo-proteinases, such as thermolysin, but not serine, thiol, or carboxyl proteinases. The polypeptide is Metalloproteinase inhibitor (smpI) (Streptomyces nigrescens).